A 207-amino-acid polypeptide reads, in one-letter code: Dephospho-CoA kinase (207 aa).

The DPCK domain maps to 10 to 207; it reads ILGLTGGIGS…FYLTLRGGQS (198 aa). Residue 18–23 participates in ATP binding; the sequence is GSGKSA.

Belongs to the CoaE family.

Its subcellular location is the cytoplasm. It catalyses the reaction 3'-dephospho-CoA + ATP = ADP + CoA + H(+). The protein operates within cofactor biosynthesis; coenzyme A biosynthesis; CoA from (R)-pantothenate: step 5/5. Catalyzes the phosphorylation of the 3'-hydroxyl group of dephosphocoenzyme A to form coenzyme A. In Pseudomonas syringae pv. syringae (strain B728a), this protein is Dephospho-CoA kinase.